The chain runs to 176 residues: MSSGHFFQWHLCDVFKSAMCCVSCTHTLSLLLCVLTLTSAATGAGPETLCGAELVDTLQFVCGERGFYFSKPTGYGPSSRRSHNRGIVDECCFQSCELRRLEMYCAPVKSGKAARSVRAQRHTDMPRTPKVSTAVQSVDRGTERRTAQHPDKTKPKKEVHQKNSSRGNTGGRNYRM.

Positions 45–73 are b; that stretch reads GPETLCGAELVDTLQFVCGERGFYFSKPT. Intrachain disulfides connect cysteine 50/cysteine 92, cysteine 62/cysteine 105, and cysteine 91/cysteine 96. Residues 74–85 form a c region; the sequence is GYGPSSRRSHNR. The segment at 86–106 is a; it reads GIVDECCFQSCELRRLEMYCA. The segment at 107-114 is d; sequence PVKSGKAA. The propeptide at 115–176 is e peptide; that stretch reads RSVRAQRHTD…GNTGGRNYRM (62 aa). Residues 115-176 form a disordered region; sequence RSVRAQRHTD…GNTGGRNYRM (62 aa). Over residues 140 to 161 the composition is skewed to basic and acidic residues; sequence RGTERRTAQHPDKTKPKKEVHQ.

Belongs to the insulin family.

It localises to the secreted. The insulin-like growth factors, isolated from plasma, are structurally and functionally related to insulin but have a much higher growth-promoting activity. Acts as a ligand for IGF1R. Binds to the alpha subunit of IGF1R, leading to the activation of the intrinsic tyrosine kinase activity which autophosphorylates tyrosine residues in the beta subunit thus initiatiating a cascade of down-stream signaling events leading to activation of the PI3K-AKT/PKB and the Ras-MAPK pathways. Binds to integrins. Its binding to integrins and subsequent ternary complex formation with integrins and IGFR1 are essential for IGF1 signaling. The protein is Insulin-like growth factor 1 of Oncorhynchus mykiss (Rainbow trout).